A 222-amino-acid polypeptide reads, in one-letter code: Imidazoleglycerol-phosphate dehydratase (222 aa).

It belongs to the imidazoleglycerol-phosphate dehydratase family.

The catalysed reaction is D-erythro-1-(imidazol-4-yl)glycerol 3-phosphate = 3-(imidazol-4-yl)-2-oxopropyl phosphate + H2O. It participates in amino-acid biosynthesis; L-histidine biosynthesis; L-histidine from 5-phospho-alpha-D-ribose 1-diphosphate: step 6/9. This chain is Imidazoleglycerol-phosphate dehydratase (HIS3), found in Scheffersomyces stipitis (strain ATCC 58785 / CBS 6054 / NBRC 10063 / NRRL Y-11545) (Yeast).